The following is a 478-amino-acid chain: ATP synthase subunit beta (478 aa).

Gly158–Thr165 contacts ATP.

It belongs to the ATPase alpha/beta chains family. F-type ATPases have 2 components, CF(1) - the catalytic core - and CF(0) - the membrane proton channel. CF(1) has five subunits: alpha(3), beta(3), gamma(1), delta(1), epsilon(1). CF(0) has three main subunits: a(1), b(2) and c(9-12). The alpha and beta chains form an alternating ring which encloses part of the gamma chain. CF(1) is attached to CF(0) by a central stalk formed by the gamma and epsilon chains, while a peripheral stalk is formed by the delta and b chains.

The protein resides in the cell inner membrane. The enzyme catalyses ATP + H2O + 4 H(+)(in) = ADP + phosphate + 5 H(+)(out). Its function is as follows. Produces ATP from ADP in the presence of a proton gradient across the membrane. The catalytic sites are hosted primarily by the beta subunits. In Rhizobium leguminosarum bv. trifolii (strain WSM2304), this protein is ATP synthase subunit beta.